A 188-amino-acid polypeptide reads, in one-letter code: Elongation factor P (188 aa).

This sequence belongs to the elongation factor P family.

Its subcellular location is the cytoplasm. Its pathway is protein biosynthesis; polypeptide chain elongation. Functionally, involved in peptide bond synthesis. Stimulates efficient translation and peptide-bond synthesis on native or reconstituted 70S ribosomes in vitro. Probably functions indirectly by altering the affinity of the ribosome for aminoacyl-tRNA, thus increasing their reactivity as acceptors for peptidyl transferase. This is Elongation factor P from Rhodopseudomonas palustris (strain BisA53).